A 50-amino-acid polypeptide reads, in one-letter code: MTETIKKSGRGVNECKRCGRKQGLVRKYDIYLCRHCFREIAHEMGFEKYS.

Residues Cys-15, Cys-18, Cys-33, and Cys-36 each contribute to the Zn(2+) site.

Belongs to the universal ribosomal protein uS14 family. Zinc-binding uS14 subfamily. Part of the 30S ribosomal subunit. Zn(2+) serves as cofactor.

In terms of biological role, binds 16S rRNA, required for the assembly of 30S particles. This Methanosarcina acetivorans (strain ATCC 35395 / DSM 2834 / JCM 12185 / C2A) protein is Small ribosomal subunit protein uS14.